The chain runs to 490 residues: Cytochrome P450 71D11 (490 aa).

C427 provides a ligand contact to heme.

It belongs to the cytochrome P450 family. Requires heme as cofactor.

In Lotus japonicus (Lotus corniculatus var. japonicus), this protein is Cytochrome P450 71D11 (CYP71D11).